The primary structure comprises 201 residues: MAGSFAQLARAAEQSRDTMLVPKTALETPPLEIHTLGAEVLRQSARRIGKVTEQTRELARDMLRSMYTAKGIGLAAPQVGIHQQLLVIDLDLENAATPPLVLINPEISAASASIDTYEEGCLSIPGVYLDVVRPTAIELSFRDEMGRPRKMKADGLMARCIQHEMDHLNGVLFVDRVTDEAGLQKELKDHGFQRQHVQSVS.

Fe cation is bound by residues cysteine 121 and histidine 163. Glutamate 164 is an active-site residue. Histidine 167 contributes to the Fe cation binding site.

This sequence belongs to the polypeptide deformylase family. Fe(2+) is required as a cofactor.

The catalysed reaction is N-terminal N-formyl-L-methionyl-[peptide] + H2O = N-terminal L-methionyl-[peptide] + formate. Its function is as follows. Removes the formyl group from the N-terminal Met of newly synthesized proteins. Requires at least a dipeptide for an efficient rate of reaction. N-terminal L-methionine is a prerequisite for activity but the enzyme has broad specificity at other positions. The protein is Peptide deformylase of Parasynechococcus marenigrum (strain WH8102).